The chain runs to 331 residues: MRGSFFSRLPPQLSLLLLLSLRRVWTQEDIGTAPSKSPVAPECPEACSCSLGGKANCSALALPAVPADLSWQVRSLLLDHNRVSALPPGAFANAGALLYLDLRENRLRSVHARAFWGLGVLQWLDLSSNQLETLPPGTFAPLRALSFLSLAGNRLALLEPSILGPLPLLRVLSLQDNSLSAIEAGLLNNLPALDVLRLHGNPWTCNCALRPLCTWLRKHPRPASETETLLCVSPRLQTLSLLTAFPDAAFKQCTQSLAARDLAVVYALGPVSFLASLAICLALGSVLTACGARRRRRRRTTVRHLLRRQLDPEGPPSLEDAGSPVTAAIQA.

The N-terminal stretch at 1-26 (MRGSFFSRLPPQLSLLLLLSLRRVWT) is a signal peptide. Topologically, residues 27–261 (QEDIGTAPSK…QCTQSLAARD (235 aa)) are extracellular. In terms of domain architecture, LRRNT spans 34-71 (PSKSPVAPECPEACSCSLGGKANCSALALPAVPADLSW). 2 disulfide bridges follow: Cys-43-Cys-49 and Cys-47-Cys-57. LRR repeat units follow at residues 72–93 (QVRSLLLDHNRVSALPPGAFAN), 96–117 (ALLYLDLRENRLRSVHARAFWG), 120–141 (VLQWLDLSSNQLETLPPGTFAP), 144–165 (ALSFLSLAGNRLALLEPSILGP), and 168–191 (LLRVLSLQDNSLSAIEAGLLNNLP). One can recognise an LRRCT domain in the interval 201-255 (NPWTCNCALRPLCTWLRKHPRPASETETLLCVSPRLQTLSLLTAFPDAAFKQCTQ). Intrachain disulfides connect Cys-205-Cys-231 and Cys-207-Cys-253. The chain crosses the membrane as a helical span at residues 262-282 (LAVVYALGPVSFLASLAICLA). Residues 283–331 (LGSVLTACGARRRRRRRTTVRHLLRRQLDPEGPPSLEDAGSPVTAAIQA) lie on the Cytoplasmic side of the membrane. Residues 310-331 (LDPEGPPSLEDAGSPVTAAIQA) form a disordered region.

As to quaternary structure, interacts with KCNMA1.

Its subcellular location is the cell membrane. The protein localises to the cytoplasm. It localises to the cytoskeleton. Functionally, auxiliary protein of the large-conductance, voltage and calcium-activated potassium channel (BK alpha). Required for the conversion of BK alpha channels from a high-voltage to a low-voltage activated channel type in non-excitable cells. These are characterized by negative membrane voltages and constant low levels of calcium. This chain is Leucine-rich repeat-containing protein 26 (Lrrc26), found in Mus musculus (Mouse).